A 465-amino-acid chain; its full sequence is tRNA modification GTPase MnmE (465 aa).

Residues Arg-27, Glu-91, and Arg-130 each contribute to the (6S)-5-formyl-5,6,7,8-tetrahydrofolate site. Positions 227–386 (GLSTAIIGRP…LEAKIADLFF (160 aa)) constitute a TrmE-type G domain. Asn-237 is a binding site for K(+). Residues 237-242 (NVGKSS), 256-262 (TDIAGTT), and 281-284 (DTAG) each bind GTP. Residue Ser-241 coordinates Mg(2+). K(+) is bound by residues Thr-256, Ile-258, and Thr-261. Residue Thr-262 participates in Mg(2+) binding. Position 465 (Lys-465) interacts with (6S)-5-formyl-5,6,7,8-tetrahydrofolate.

The protein belongs to the TRAFAC class TrmE-Era-EngA-EngB-Septin-like GTPase superfamily. TrmE GTPase family. Homodimer. Heterotetramer of two MnmE and two MnmG subunits. K(+) is required as a cofactor.

It localises to the cytoplasm. Exhibits a very high intrinsic GTPase hydrolysis rate. Involved in the addition of a carboxymethylaminomethyl (cmnm) group at the wobble position (U34) of certain tRNAs, forming tRNA-cmnm(5)s(2)U34. The polypeptide is tRNA modification GTPase MnmE (Enterococcus faecalis (strain ATCC 700802 / V583)).